Reading from the N-terminus, the 194-residue chain is Large ribosomal subunit protein bL9c (194 aa).

The transit peptide at 1–39 directs the protein to the chloroplast; sequence MASSTLSSLSSTPLQHSFAANLKTCSQFPNKSSGFMVFA.

It belongs to the bacterial ribosomal protein bL9 family. In terms of assembly, part of the 50S ribosomal subunit.

It is found in the plastid. The protein resides in the chloroplast. Binds to the 23S rRNA. This chain is Large ribosomal subunit protein bL9c (RPL9), found in Pisum sativum (Garden pea).